Reading from the N-terminus, the 241-residue chain is Caffeoyl-CoA O-methyltransferase (241 aa).

Residue Lys14 coordinates substrate. S-adenosyl-L-methionine-binding positions include Thr58, Glu80, 82–83 (GV), Ser88, Asp106, and Ala135. Asp158 is a substrate binding site. Asp158 lines the a divalent metal cation pocket. Asp160 lines the S-adenosyl-L-methionine pocket. A divalent metal cation-binding residues include Asp184 and Asn185.

It belongs to the class I-like SAM-binding methyltransferase superfamily. Cation-dependent O-methyltransferase family. CCoAMT subfamily. It depends on a divalent metal cation as a cofactor.

It carries out the reaction (E)-caffeoyl-CoA + S-adenosyl-L-methionine = (E)-feruloyl-CoA + S-adenosyl-L-homocysteine + H(+). It functions in the pathway aromatic compound metabolism; phenylpropanoid biosynthesis. Its function is as follows. Methylates caffeoyl-CoA to feruloyl-CoA and 5-hydroxyferuloyl-CoA to sinapoyl-CoA. Plays a role in the synthesis of feruloylated polysaccharides. Involved in the reinforcement of the plant cell wall. Also involved in the responding to wounding or pathogen challenge by the increased formation of cell wall-bound ferulic acid polymers. The sequence is that of Caffeoyl-CoA O-methyltransferase from Stellaria longipes (Longstalk starwort).